The chain runs to 192 residues: uncharacterized protein (192 aa).

To A.aeolicus AQ_054.

This is an uncharacterized protein from Thermotoga maritima (strain ATCC 43589 / DSM 3109 / JCM 10099 / NBRC 100826 / MSB8).